Reading from the N-terminus, the 682-residue chain is K(+)-insensitive pyrophosphate-energized proton pump 2 (682 aa).

Helical transmembrane passes span 1-21 (MELFPIIPAGGILALLVALYM), 56-76 (TIAGLALIVAVLLALLTRQYH), 78-98 (AVAFITGAFASALSGYIGMYV), 130-150 (LAVTALSLLGVTSLFYAFGGA), and 160-180 (IVGFGFGASFVALFAQLSGGI). Lysine 183 contributes to the substrate binding site. Mg(2+)-binding residues include aspartate 186, aspartate 190, and aspartate 216. 7 consecutive transmembrane segments (helical) span residues 237–257 (IGAMILGIALVPFFGVKGIVF), 258–278 (PLVARAAGIIASIIGMFFVRA), 291–311 (GYIVTSILAIIFLYPISRYML), 318–338 (FIYFYGAGIIGIVLSFIFVLI), 353–373 (IARASITGPATNIISGVAVGF), 375–395 (STALPVVFISLAILGAYWLGL), and 404–424 (LYGTAVATMGMLSTAAYILAM). Aspartate 432 contributes to the Mg(2+) binding site. A run of 4 helical transmembrane segments spans residues 468–488 (YAIGSAALATFLLFSAYIDEV), 506–526 (EVFVGAFIAAMMVLLFSSTAI), 574–594 (MVLPGLIVVITPIIVGLVLKA), and 595–615 (EAAAAFLMVGTITGVIVALFL). Ca(2+) is bound by residues aspartate 623, aspartate 649, and aspartate 653. Lysine 656 is a binding site for substrate. A helical transmembrane segment spans residues 662-682 (SLHVLVKLISTITLVLAGLFI).

It belongs to the H(+)-translocating pyrophosphatase (TC 3.A.10) family. K(+)-insensitive subfamily. Homodimer. Requires Mg(2+) as cofactor.

It localises to the cell membrane. It carries out the reaction diphosphate + H2O + H(+)(in) = 2 phosphate + 2 H(+)(out). Proton pump that utilizes the energy of pyrophosphate hydrolysis as the driving force for proton movement across the membrane. Generates a proton motive force. In Moorella thermoacetica (strain ATCC 39073 / JCM 9320), this protein is K(+)-insensitive pyrophosphate-energized proton pump 2.